A 350-amino-acid chain; its full sequence is N-acetyl-gamma-glutamyl-phosphate reductase (350 aa).

Cys154 is a catalytic residue.

This sequence belongs to the NAGSA dehydrogenase family. Type 1 subfamily.

It localises to the cytoplasm. The enzyme catalyses N-acetyl-L-glutamate 5-semialdehyde + phosphate + NADP(+) = N-acetyl-L-glutamyl 5-phosphate + NADPH + H(+). Its pathway is amino-acid biosynthesis; L-arginine biosynthesis; N(2)-acetyl-L-ornithine from L-glutamate: step 3/4. In terms of biological role, catalyzes the NADPH-dependent reduction of N-acetyl-5-glutamyl phosphate to yield N-acetyl-L-glutamate 5-semialdehyde. The sequence is that of N-acetyl-gamma-glutamyl-phosphate reductase from Corynebacterium efficiens (strain DSM 44549 / YS-314 / AJ 12310 / JCM 11189 / NBRC 100395).